A 103-amino-acid polypeptide reads, in one-letter code: Large ribosomal subunit protein bL21 (103 aa).

It belongs to the bacterial ribosomal protein bL21 family. As to quaternary structure, part of the 50S ribosomal subunit. Contacts protein L20.

In terms of biological role, this protein binds to 23S rRNA in the presence of protein L20. This chain is Large ribosomal subunit protein bL21, found in Methylibium petroleiphilum (strain ATCC BAA-1232 / LMG 22953 / PM1).